The primary structure comprises 315 residues: DNA-directed RNA polymerase subunit alpha (315 aa).

The interval 1–227 (MTQFQIECVE…NLFNPFKKIN (227 aa)) is alpha N-terminal domain (alpha-NTD). The tract at residues 239 to 315 (EDKISQIPIE…PKRKTNKKEN (77 aa)) is alpha C-terminal domain (alpha-CTD).

The protein belongs to the RNA polymerase alpha chain family. In terms of assembly, in plastids the minimal PEP RNA polymerase catalytic core is composed of four subunits: alpha, beta, beta', and beta''. When a (nuclear-encoded) sigma factor is associated with the core the holoenzyme is formed, which can initiate transcription.

The protein resides in the plastid. It localises to the cyanelle. The catalysed reaction is RNA(n) + a ribonucleoside 5'-triphosphate = RNA(n+1) + diphosphate. Its function is as follows. DNA-dependent RNA polymerase catalyzes the transcription of DNA into RNA using the four ribonucleoside triphosphates as substrates. This Cyanophora paradoxa protein is DNA-directed RNA polymerase subunit alpha.